The primary structure comprises 215 residues: Large ribosomal subunit protein uL3 (215 aa).

Gln-151 is subject to N5-methylglutamine.

This sequence belongs to the universal ribosomal protein uL3 family. Part of the 50S ribosomal subunit. Forms a cluster with proteins L14 and L19. Post-translationally, methylated by PrmB.

One of the primary rRNA binding proteins, it binds directly near the 3'-end of the 23S rRNA, where it nucleates assembly of the 50S subunit. In Rickettsia massiliae (strain Mtu5), this protein is Large ribosomal subunit protein uL3.